A 63-amino-acid polypeptide reads, in one-letter code: Trypsin inhibitor 5 (63 aa).

The signal sequence occupies residues 1 to 21; it reads MASVAESSGVVEVIELISDGG. Residues 22–34 constitute a propeptide that is removed on maturation; the sequence is NDLPRKIMSGRHG. Intrachain disulfides connect Cys-37–Cys-54, Cys-44–Cys-56, and Cys-50–Cys-62.

It belongs to the protease inhibitor I7 (squash-type serine protease inhibitor) family.

The protein resides in the secreted. In terms of biological role, inhibits trypsin. The sequence is that of Trypsin inhibitor 5 from Luffa aegyptiaca (Sponge gourd).